The chain runs to 504 residues: Maturase K (504 aa).

This sequence belongs to the intron maturase 2 family. MatK subfamily.

It localises to the plastid. It is found in the chloroplast. Usually encoded in the trnK tRNA gene intron. Probably assists in splicing its own and other chloroplast group II introns. This is Maturase K from Quercus gemelliflora (Pasang hiris).